The sequence spans 246 residues: Aquaporin AqpM (246 aa).

At 1–11 (MVSLTKRCIAE) the chain is on the cytoplasmic side. The helical transmembrane segment at 12 to 32 (FIGTFILVFFGAGSAAVTLMI) threads the bilayer. Residues 33-55 (ASGGTSPNPFNIGIGLLGGLGDW) lie on the Extracellular side of the membrane. A helical membrane pass occupies residues 56-76 (VAIGLAFGFAIAASIYALGNI). Topologically, residues 77–103 (SGCHINPAVTIGLWSVKKFPGREVVPY) are cytoplasmic. The NPA 1 motif lies at 82 to 84 (NPA). The helical transmembrane segment at 104-124 (IIAQLLGAAFGSFIFLQCAGI) threads the bilayer. The Extracellular portion of the chain corresponds to 125 to 145 (GAATVGGLGATAPFPGISYWQ). A helical membrane pass occupies residues 146–166 (AMLAEVVGTFLLMITIMGIAV). The Cytoplasmic portion of the chain corresponds to 167-172 (DERAPK). The chain crosses the membrane as a helical span at residues 173–193 (GFAGIIIGLTVAGIITTLGNI). At 194–217 (SGSSLNPARTFGPYLNDMIFAGTN) the chain is on the extracellular side. Positions 199-201 (NPA) match the NPA 2 motif. The helical transmembrane segment at 218-238 (LWNYYPIYVIGPIVGAVLAAL) threads the bilayer. At 239–246 (TYQYLTSE) the chain is on the cytoplasmic side.

Belongs to the MIP/aquaporin (TC 1.A.8) family. In terms of assembly, homotetramer.

The protein resides in the cell membrane. Its function is as follows. Channel that permits osmotically driven movement of water in both directions. It mediates rapid entry or exit of water in response to abrupt changes in osmolarity. Also exhibits a transient but reproducible increase in the initial glycerol flux. This chain is Aquaporin AqpM (aqpM), found in Methanothermobacter marburgensis (strain ATCC BAA-927 / DSM 2133 / JCM 14651 / NBRC 100331 / OCM 82 / Marburg) (Methanobacterium thermoautotrophicum).